The following is a 459-amino-acid chain: MIIYDSILKQKVEFKPIREYEANIYVCGPTVYDDAHLGHAKSSISFDLLRRTLKSLGYKVKFIKNFTDIDDKILKKMSQTGKSLEDITNHYISRYKADMYALNVADADIEPKATTSLTSIINYITTLFENGWAYKIDDGIYFDTSKDDKYLSLSGRKDENLIARVASKDEKKDEKDFVLWKFDENWYDSPFGRGRPGWHSECVAMIKDHFCGSCEFEIDIHAGGADLLFPHHENEAAQCRCAYNKNLAKYWMHNGFVQVNNEKMSKSLGNSFFIKDALELVPGEALRFYLMSSHYRANFNYDIDDLKSSKKRLDKIYRLKKRLIGVKTSKTDAKFKKDILDAMSDDLNISVALAILDEMVNNANAKLDNEPKNRDFKQILVSNLEFVKELLGILYIDEFKWFQWGVDDSLKQEISVLIDQRNMAKKDKNFILADQIRDKLTNMDISIMDTPNGTMWEKV.

Cysteine 27 is a Zn(2+) binding site. Residues 29–39 carry the 'HIGH' region motif; sequence PTVYDDAHLGH. 3 residues coordinate Zn(2+): cysteine 202, histidine 231, and glutamate 235. The 'KMSKS' region motif lies at 263–267; that stretch reads KMSKS. Position 266 (lysine 266) interacts with ATP.

The protein belongs to the class-I aminoacyl-tRNA synthetase family. As to quaternary structure, monomer. Zn(2+) serves as cofactor.

The protein resides in the cytoplasm. The catalysed reaction is tRNA(Cys) + L-cysteine + ATP = L-cysteinyl-tRNA(Cys) + AMP + diphosphate. This is Cysteine--tRNA ligase from Campylobacter fetus subsp. fetus (strain 82-40).